A 668-amino-acid chain; its full sequence is UvrABC system protein B (668 aa).

A Helicase ATP-binding domain is found at Gln-31–Arg-416. Gly-44–Thr-51 contributes to the ATP binding site. The Beta-hairpin motif lies at Tyr-97–Ile-120. Positions Gln-433–Ile-596 constitute a Helicase C-terminal domain. A UVR domain is found at Glu-621–Gln-656.

This sequence belongs to the UvrB family. As to quaternary structure, forms a heterotetramer with UvrA during the search for lesions. Interacts with UvrC in an incision complex.

The protein localises to the cytoplasm. In terms of biological role, the UvrABC repair system catalyzes the recognition and processing of DNA lesions. A damage recognition complex composed of 2 UvrA and 2 UvrB subunits scans DNA for abnormalities. Upon binding of the UvrA(2)B(2) complex to a putative damaged site, the DNA wraps around one UvrB monomer. DNA wrap is dependent on ATP binding by UvrB and probably causes local melting of the DNA helix, facilitating insertion of UvrB beta-hairpin between the DNA strands. Then UvrB probes one DNA strand for the presence of a lesion. If a lesion is found the UvrA subunits dissociate and the UvrB-DNA preincision complex is formed. This complex is subsequently bound by UvrC and the second UvrB is released. If no lesion is found, the DNA wraps around the other UvrB subunit that will check the other stand for damage. This chain is UvrABC system protein B, found in Chlamydia trachomatis serovar D (strain ATCC VR-885 / DSM 19411 / UW-3/Cx).